Consider the following 427-residue polypeptide: Glutamate-1-semialdehyde 2,1-aminomutase (427 aa).

Residue Lys-265 is modified to N6-(pyridoxal phosphate)lysine.

It belongs to the class-III pyridoxal-phosphate-dependent aminotransferase family. HemL subfamily. In terms of assembly, homodimer. Pyridoxal 5'-phosphate serves as cofactor.

Its subcellular location is the cytoplasm. The enzyme catalyses (S)-4-amino-5-oxopentanoate = 5-aminolevulinate. Its pathway is porphyrin-containing compound metabolism; protoporphyrin-IX biosynthesis; 5-aminolevulinate from L-glutamyl-tRNA(Glu): step 2/2. The polypeptide is Glutamate-1-semialdehyde 2,1-aminomutase (Bordetella avium (strain 197N)).